We begin with the raw amino-acid sequence, 28 residues long: Conotoxin as14b (28 aa).

Cystine bridges form between Cys7–Cys27 and Cys11–Cys23.

It belongs to the conotoxin L superfamily. In terms of tissue distribution, expressed by the venom duct.

Its subcellular location is the secreted. In vivo, intracranial injection elicits scratching and grooming activity in mice, and causes body and rear limb extension and tail curling immediately upon injection. This chain is Conotoxin as14b, found in Conus cancellatus (Cancellate cone).